The sequence spans 621 residues: Type 2 DNA topoisomerase 6 subunit B (621 aa).

Residues Asn48, Asp80, Ser101–Arg102, Gly111–Ser118, and Lys435 contribute to the ATP site.

Belongs to the TOP6B family. Homodimer. Heterotetramer of two Top6A and two Top6B chains.

The catalysed reaction is ATP-dependent breakage, passage and rejoining of double-stranded DNA.. Its function is as follows. Relaxes both positive and negative superturns and exhibits a strong decatenase activity. The chain is Type 2 DNA topoisomerase 6 subunit B from Methanosarcina acetivorans (strain ATCC 35395 / DSM 2834 / JCM 12185 / C2A).